Reading from the N-terminus, the 178-residue chain is Ribosome maturation factor RimM (178 aa).

The PRC barrel domain occupies 104-177; sequence SDEYYFYEVI…KIVVKLPEWL (74 aa).

The protein belongs to the RimM family. In terms of assembly, binds ribosomal protein uS19.

The protein localises to the cytoplasm. Functionally, an accessory protein needed during the final step in the assembly of 30S ribosomal subunit, possibly for assembly of the head region. Essential for efficient processing of 16S rRNA. May be needed both before and after RbfA during the maturation of 16S rRNA. It has affinity for free ribosomal 30S subunits but not for 70S ribosomes. This is Ribosome maturation factor RimM from Thermosipho melanesiensis (strain DSM 12029 / CIP 104789 / BI429).